The chain runs to 611 residues: DNA mismatch repair protein MutL (611 aa).

A disordered region spans residues 364–384 (NVNSKPSKYRPATSPTVPKYT).

The protein belongs to the DNA mismatch repair MutL/HexB family.

Its function is as follows. This protein is involved in the repair of mismatches in DNA. It is required for dam-dependent methyl-directed DNA mismatch repair. May act as a 'molecular matchmaker', a protein that promotes the formation of a stable complex between two or more DNA-binding proteins in an ATP-dependent manner without itself being part of a final effector complex. In Rickettsia bellii (strain OSU 85-389), this protein is DNA mismatch repair protein MutL.